The sequence spans 158 residues: Fucolectin (158 aa).

Residues 16-148 are F5/8 type C-like; it reads KATQSAQLRG…TSESLHLCEV (133 aa). Ca(2+) contacts are provided by Asn35, Asp38, Asn40, and Ser49. Cystine bridges form between Cys50–Cys146, Cys82–Cys83, and Cys108–Cys124. Positions 52 and 79 each coordinate alpha-L-fucose. Positions 79–81 match the Cell attachment site motif; it reads RGD. Residue Arg86 participates in alpha-L-fucose binding. Ca(2+)-binding residues include Cys146 and Glu147.

Belongs to the fucolectin family. In terms of assembly, homotrimer.

Its subcellular location is the secreted. In terms of biological role, acts as a defensive agent. Recognizes blood group fucosylated oligosaccharides including A, B, H and Lewis B-type antigens. Does not recognize Lewis A antigen and has low affinity for monovalent haptens. The sequence is that of Fucolectin from Anguilla anguilla (European freshwater eel).